Consider the following 469-residue polypeptide: Acetyl-CoA decarbonylase/synthase complex subunit beta 2 (469 aa).

4 residues coordinate [Ni-Fe-S] cluster: C187, C190, C276, and C278.

The protein belongs to the CdhC family. In terms of assembly, monomer. The ACDS complex is made up of alpha, epsilon, beta, gamma and delta chains with a probable stoichiometry of (alpha(2)epsilon(2))(4)-beta(8)-(gamma(1)delta(1))(8) (Potential). The cofactor is [Ni-Fe-S] cluster.

The enzyme catalyses Co(I)-[corrinoid Fe-S protein] + acetyl-CoA + H(+) = methyl-Co(III)-[corrinoid Fe-S protein] + CO + CoA. In terms of biological role, part of a complex that catalyzes the reversible cleavage of acetyl-CoA, allowing autotrophic growth from CO(2). The alpha-epsilon complex generates CO from CO(2), while the beta subunit (this protein) combines the CO with CoA and a methyl group to form acetyl-CoA. The methyl group, which is incorporated into acetyl-CoA, is transferred to the beta subunit by a corrinoid iron-sulfur protein (the gamma-delta complex). This chain is Acetyl-CoA decarbonylase/synthase complex subunit beta 2 (cdhC2), found in Methanocaldococcus jannaschii (strain ATCC 43067 / DSM 2661 / JAL-1 / JCM 10045 / NBRC 100440) (Methanococcus jannaschii).